The sequence spans 337 residues: MIYKIINFILSKKDHEEKKDLLLKIMKFFNKTPLNFLIKNKFPNNNISCMGLNFKNILGLAAGLDKNGDYIKLFSDIGFGFIELGTVTLKPQHGEKKPRLFCFPNVYGIINRMGFNNNGIENLIENIKNEKNVKSILGINIGKNKDTLIEKAKDDYLICINKAYYYSDYISINISSPNTKDLRKLQFGELFSDLLKSIKEEQNKLNKIYNKYVPILIKISPDINNSEIIQISDCLLSYNIDGVIATNTTVNKDIIMRCCNNCEKGGLSGAPLNENSTRIIKKLSKELKGKIPIIGSGGIISVKSAKEKIKAGASLIQIYSGLVFFGLKIIKKLIKSF.

FMN contacts are provided by residues 62–66 (AGLDK) and Thr-86. Residue Lys-66 coordinates substrate. 111 to 115 (NRMGF) provides a ligand contact to substrate. The FMN site is built by Asn-140 and Asn-173. Position 173 (Asn-173) interacts with substrate. Residue Ser-176 is the Nucleophile of the active site. Asn-178 lines the substrate pocket. Residues Lys-218 and Thr-246 each contribute to the FMN site. 247-248 (NT) provides a ligand contact to substrate. FMN-binding positions include Gly-269, Gly-298, and 319–320 (YS).

It belongs to the dihydroorotate dehydrogenase family. Type 2 subfamily. As to quaternary structure, monomer. The cofactor is FMN.

It localises to the cell membrane. It catalyses the reaction (S)-dihydroorotate + a quinone = orotate + a quinol. Its pathway is pyrimidine metabolism; UMP biosynthesis via de novo pathway; orotate from (S)-dihydroorotate (quinone route): step 1/1. Its function is as follows. Catalyzes the conversion of dihydroorotate to orotate with quinone as electron acceptor. The chain is Dihydroorotate dehydrogenase (quinone) from Wigglesworthia glossinidia brevipalpis.